Here is a 62-residue protein sequence, read N- to C-terminus: Large ribosomal subunit protein bL33 (62 aa).

Belongs to the bacterial ribosomal protein bL33 family.

The protein is Large ribosomal subunit protein bL33 of Azobacteroides pseudotrichonymphae genomovar. CFP2.